The sequence spans 455 residues: Bifunctional protein GlmU (455 aa).

The interval 1-226 (MSLDIVILAA…AMEVQGANDR (226 aa)) is pyrophosphorylase. Residues 8 to 11 (LAAG), Lys22, Gln73, 78 to 79 (GT), 99 to 101 (YGD), Gly136, Glu151, Asn166, and Asn224 contribute to the UDP-N-acetyl-alpha-D-glucosamine site. Residue Asp101 coordinates Mg(2+). Asn224 is a binding site for Mg(2+). The segment at 227 to 247 (KQLSELERHYQLREARRLMAG) is linker. The interval 248-455 (GVTLRDPARF…WKRPVKIRKD (208 aa)) is N-acetyltransferase. Positions 330 and 348 each coordinate UDP-N-acetyl-alpha-D-glucosamine. Catalysis depends on His360, which acts as the Proton acceptor. UDP-N-acetyl-alpha-D-glucosamine is bound by residues Tyr363 and Asn374. Acetyl-CoA is bound by residues Ala377, 383–384 (NY), Ser402, Ala420, and Arg437.

It in the N-terminal section; belongs to the N-acetylglucosamine-1-phosphate uridyltransferase family. This sequence in the C-terminal section; belongs to the transferase hexapeptide repeat family. As to quaternary structure, homotrimer. Requires Mg(2+) as cofactor.

It is found in the cytoplasm. The enzyme catalyses alpha-D-glucosamine 1-phosphate + acetyl-CoA = N-acetyl-alpha-D-glucosamine 1-phosphate + CoA + H(+). It catalyses the reaction N-acetyl-alpha-D-glucosamine 1-phosphate + UTP + H(+) = UDP-N-acetyl-alpha-D-glucosamine + diphosphate. Its pathway is nucleotide-sugar biosynthesis; UDP-N-acetyl-alpha-D-glucosamine biosynthesis; N-acetyl-alpha-D-glucosamine 1-phosphate from alpha-D-glucosamine 6-phosphate (route II): step 2/2. It functions in the pathway nucleotide-sugar biosynthesis; UDP-N-acetyl-alpha-D-glucosamine biosynthesis; UDP-N-acetyl-alpha-D-glucosamine from N-acetyl-alpha-D-glucosamine 1-phosphate: step 1/1. It participates in bacterial outer membrane biogenesis; LPS lipid A biosynthesis. Functionally, catalyzes the last two sequential reactions in the de novo biosynthetic pathway for UDP-N-acetylglucosamine (UDP-GlcNAc). The C-terminal domain catalyzes the transfer of acetyl group from acetyl coenzyme A to glucosamine-1-phosphate (GlcN-1-P) to produce N-acetylglucosamine-1-phosphate (GlcNAc-1-P), which is converted into UDP-GlcNAc by the transfer of uridine 5-monophosphate (from uridine 5-triphosphate), a reaction catalyzed by the N-terminal domain. This is Bifunctional protein GlmU from Pseudomonas savastanoi pv. phaseolicola (strain 1448A / Race 6) (Pseudomonas syringae pv. phaseolicola (strain 1448A / Race 6)).